We begin with the raw amino-acid sequence, 139 residues long: uncharacterized protein (139 aa).

To E.coli YebE.

This is an uncharacterized protein from Yersinia enterocolitica.